The following is an 800-amino-acid chain: Probable replication endonuclease from prophage-like region (800 aa).

Residues tyrosine 503 and tyrosine 507 each act as O-(5'-phospho-DNA)-tyrosine intermediate in the active site.

The protein belongs to the phage GPA family.

In terms of biological role, possible endonuclease which induces a single-strand cut and initiates DNA replication. The chain is Probable replication endonuclease from prophage-like region from Salmonella paratyphi A (strain ATCC 9150 / SARB42).